A 377-amino-acid polypeptide reads, in one-letter code: Chaperone protein DnaJ (377 aa).

The region spanning 5 to 70 (DFYEVLGVER…SKRAAYDQYG (66 aa)) is the J domain. The CR-type zinc-finger motif lies at 136 to 214 (GTTVTIRVPT…CHGQGRVEEQ (79 aa)). Residues cysteine 149, cysteine 152, cysteine 166, cysteine 169, cysteine 188, cysteine 191, cysteine 202, and cysteine 205 each coordinate Zn(2+). CXXCXGXG motif repeat units lie at residues 149-156 (CKTCNGSG), 166-173 (CTTCGGIG), 188-195 (CPRCHGTG), and 202-209 (CGSCHGQG).

This sequence belongs to the DnaJ family. In terms of assembly, homodimer. Zn(2+) is required as a cofactor.

It is found in the cytoplasm. Functionally, participates actively in the response to hyperosmotic and heat shock by preventing the aggregation of stress-denatured proteins and by disaggregating proteins, also in an autonomous, DnaK-independent fashion. Unfolded proteins bind initially to DnaJ; upon interaction with the DnaJ-bound protein, DnaK hydrolyzes its bound ATP, resulting in the formation of a stable complex. GrpE releases ADP from DnaK; ATP binding to DnaK triggers the release of the substrate protein, thus completing the reaction cycle. Several rounds of ATP-dependent interactions between DnaJ, DnaK and GrpE are required for fully efficient folding. Also involved, together with DnaK and GrpE, in the DNA replication of plasmids through activation of initiation proteins. The protein is Chaperone protein DnaJ of Pseudomonas aeruginosa (strain LESB58).